Here is a 97-residue protein sequence, read N- to C-terminus: ATP-dependent Clp protease adapter protein ClpS (97 aa).

This sequence belongs to the ClpS family. As to quaternary structure, binds to the N-terminal domain of the chaperone ClpA.

In terms of biological role, involved in the modulation of the specificity of the ClpAP-mediated ATP-dependent protein degradation. The sequence is that of ATP-dependent Clp protease adapter protein ClpS from Nautilia profundicola (strain ATCC BAA-1463 / DSM 18972 / AmH).